Reading from the N-terminus, the 165-residue chain is DNA mimic protein DMP19 (165 aa).

Belongs to the DMP19-like protein family. As to quaternary structure, monomer. Homodimer. The monomeric form of DMP19 interacts with the DNA-binding protein HU homodimer with 1:1 stoichiometry. The dimeric form of DMP19 interacts with the Neisseria hypothetical transcription factor (NHTF) dimer.

With respect to regulation, activity can be modulated in vitro by crown ethers, which are small cyclic polyethers that can modify protein surface behavior dramatically by stabilizing either intra- or intermolecular interactions, thereby probably altering the protein's tertiary and quaternary structure. In terms of biological role, acts as a DNA mimic. Interacts with DNA-binding proteins and prevents their binding to DNA by occupying the DNA binding sites on the proteins, acting as a competitive inhibitor. DMP19 is a bifunctional DNA mimic protein involved in controlling nucleoid formation as well as gene regulation. This bifunctionality depends on different oligomeric states. The monomeric form interacts with the DNA-binding protein HU, which prevents HU from binding to DNA and forming nucleoids. The dimeric form interacts with the Neisseria hypothetical transcription factor (NHTF) and prevents NHTF from binding to its DNA-binding sites, thereby blocking its repressor activity and influencing expression of the target genes. DMP19 might use these different oligomerizations to regulate genes in two steps: the monomeric form may first release selected gene regions in chromosomal DNA by preventing HU from binding to DNA and forming nucleoids, then the dimeric form blocks the gene repressor activity of NHTF and ensures the continued expression of NHTF-controlled genes. This chain is DNA mimic protein DMP19, found in Neisseria meningitidis serogroup B (strain ATCC BAA-335 / MC58).